A 258-amino-acid polypeptide reads, in one-letter code: Beta carbonic anhydrase 3 (258 aa).

The first 28 residues, 1-28 (MSTESYEDAIKRLGELLSKKSDLGNVAA), serve as a signal peptide directing secretion. A coiled-coil region spans residues 24-54 (GNVAAAKIKKLTDELEELDSNKLDAVERIKS). Residue Thr-35 is modified to Phosphothreonine. The residue at position 95 (Ser-95) is a Phosphoserine. Cys-201 carries the post-translational modification S-nitrosocysteine.

Belongs to the beta-class carbonic anhydrase family. As to expression, strongly expressed in aerial tissues including leaves, stems, flowers and siliques, and, to a lower extent, in roots.

Its subcellular location is the cytoplasm. The protein localises to the cytosol. It catalyses the reaction hydrogencarbonate + H(+) = CO2 + H2O. Functionally, reversible hydration of carbon dioxide. The sequence is that of Beta carbonic anhydrase 3 (BCA3) from Arabidopsis thaliana (Mouse-ear cress).